Consider the following 529-residue polypeptide: Phosphoenolpyruvate carboxykinase (ATP) (529 aa).

Positions 55, 190, and 196 each coordinate substrate. Residues Lys-196, His-215, and 231–239 (GLSGTGKTT) each bind ATP. The Mn(2+) site is built by Lys-196 and His-215. Position 252 (Asp-252) interacts with Mn(2+). Positions 280, 317, and 442 each coordinate ATP. Arg-317 contacts substrate.

The protein belongs to the phosphoenolpyruvate carboxykinase (ATP) family. Mn(2+) is required as a cofactor.

The protein localises to the cytoplasm. The enzyme catalyses oxaloacetate + ATP = phosphoenolpyruvate + ADP + CO2. It functions in the pathway carbohydrate biosynthesis; gluconeogenesis. In terms of biological role, involved in the gluconeogenesis. Catalyzes the conversion of oxaloacetate (OAA) to phosphoenolpyruvate (PEP) through direct phosphoryl transfer between the nucleoside triphosphate and OAA. The polypeptide is Phosphoenolpyruvate carboxykinase (ATP) (Deinococcus geothermalis (strain DSM 11300 / CIP 105573 / AG-3a)).